The primary structure comprises 135 residues: Small ribosomal subunit protein uS8 (135 aa).

The protein belongs to the universal ribosomal protein uS8 family. Part of the 30S ribosomal subunit. Contacts proteins S5 and S12.

In terms of biological role, one of the primary rRNA binding proteins, it binds directly to 16S rRNA central domain where it helps coordinate assembly of the platform of the 30S subunit. The polypeptide is Small ribosomal subunit protein uS8 (Nocardioides sp. (strain ATCC BAA-499 / JS614)).